We begin with the raw amino-acid sequence, 398 residues long: Cysteine desulfurase (398 aa).

Pyridoxal 5'-phosphate is bound by residues 74 to 75 (GT), asparagine 155, glutamine 182, and 202 to 204 (CGH). An N6-(pyridoxal phosphate)lysine modification is found at lysine 205. Over residues 230–244 (GHQERSRRAGNGERA) the composition is skewed to basic and acidic residues. The disordered stretch occupies residues 230-253 (GHQERSRRAGNGERAGHRRAGGGA). Cysteine 327 acts as the Cysteine persulfide intermediate in catalysis. Cysteine 327 is a binding site for [2Fe-2S] cluster.

The protein belongs to the class-V pyridoxal-phosphate-dependent aminotransferase family. NifS/IscS subfamily. Homodimer. It depends on pyridoxal 5'-phosphate as a cofactor.

It catalyses the reaction (sulfur carrier)-H + L-cysteine = (sulfur carrier)-SH + L-alanine. Catalyzes the removal of elemental sulfur atoms from cysteine to produce alanine. Seems to participate in the biosynthesis of the nitrogenase metalloclusters by providing the inorganic sulfur required for the Fe-S core formation. In Azospirillum brasilense, this protein is Cysteine desulfurase.